The sequence spans 418 residues: MTDFNIATMAQKAKQASRVAAQLNSSEKNALLNDIATAIENNSDAIIQENSKDIAAGREKGLSQAMLDRLVLTDKGIKDMSSAIREIVALTDPVGDVDKLSLRPNGIQVGKMRIPLGVIAMIYEARPNVTAEAAALCIKSGNAVILRGGSEAIHSNLAIAHCLHQVLTTHNVDEHIVCVIPDTSRSVIEQLLQQSDTIDLVIPRGGEGLIRYVSENSRIPVIQHYKGVCHLYIDKYADLDKAVNILVNGKTQKPSACNAFETVLVHSDISAKFLPLAAKALNDAAQVKVHACKNSIGFFPNAELATNEDYQAEYLAQEIAVKVVSSFDTAIGHINEFTSDHTEVIISQDISRSQKFIRQINSSVVMVNASSRFSDGNQLGLGSEIGISTSKLHAYGPMGLEALTTEKFVVFGDGQIRQ.

The protein belongs to the gamma-glutamyl phosphate reductase family.

It localises to the cytoplasm. The enzyme catalyses L-glutamate 5-semialdehyde + phosphate + NADP(+) = L-glutamyl 5-phosphate + NADPH + H(+). It functions in the pathway amino-acid biosynthesis; L-proline biosynthesis; L-glutamate 5-semialdehyde from L-glutamate: step 2/2. Its function is as follows. Catalyzes the NADPH-dependent reduction of L-glutamate 5-phosphate into L-glutamate 5-semialdehyde and phosphate. The product spontaneously undergoes cyclization to form 1-pyrroline-5-carboxylate. The polypeptide is Gamma-glutamyl phosphate reductase (Colwellia psychrerythraea (strain 34H / ATCC BAA-681) (Vibrio psychroerythus)).